Here is a 482-residue protein sequence, read N- to C-terminus: tRNA sulfurtransferase (482 aa).

The THUMP domain occupies 61-165 (AEVLEILTHT…NDRLNQVLAS (105 aa)). ATP-binding positions include 183-184 (LI), K265, G287, and Q296. Cysteines 344 and 456 form a disulfide. The Rhodanese domain occupies 404 to 482 (VEEHAIVLDI…GFNNVKVYRP (79 aa)). The active-site Cysteine persulfide intermediate is the C456.

It belongs to the ThiI family.

The protein resides in the cytoplasm. It catalyses the reaction [ThiI sulfur-carrier protein]-S-sulfanyl-L-cysteine + a uridine in tRNA + 2 reduced [2Fe-2S]-[ferredoxin] + ATP + H(+) = [ThiI sulfur-carrier protein]-L-cysteine + a 4-thiouridine in tRNA + 2 oxidized [2Fe-2S]-[ferredoxin] + AMP + diphosphate. It carries out the reaction [ThiS sulfur-carrier protein]-C-terminal Gly-Gly-AMP + S-sulfanyl-L-cysteinyl-[cysteine desulfurase] + AH2 = [ThiS sulfur-carrier protein]-C-terminal-Gly-aminoethanethioate + L-cysteinyl-[cysteine desulfurase] + A + AMP + 2 H(+). The protein operates within cofactor biosynthesis; thiamine diphosphate biosynthesis. In terms of biological role, catalyzes the ATP-dependent transfer of a sulfur to tRNA to produce 4-thiouridine in position 8 of tRNAs, which functions as a near-UV photosensor. Also catalyzes the transfer of sulfur to the sulfur carrier protein ThiS, forming ThiS-thiocarboxylate. This is a step in the synthesis of thiazole, in the thiamine biosynthesis pathway. The sulfur is donated as persulfide by IscS. The chain is tRNA sulfurtransferase from Vibrio campbellii (strain ATCC BAA-1116).